We begin with the raw amino-acid sequence, 590 residues long: UvrABC system protein C (590 aa).

The region spanning 15-98 (AEPGVYQFVA…VKRHQPRYNV (84 aa)) is the GIY-YIG domain. The UVR domain occupies 207-242 (GALADPLRREMAAAAQAEAFERAANLRDRLAVVEGF).

The protein belongs to the UvrC family. In terms of assembly, interacts with UvrB in an incision complex.

Its subcellular location is the cytoplasm. Its function is as follows. The UvrABC repair system catalyzes the recognition and processing of DNA lesions. UvrC both incises the 5' and 3' sides of the lesion. The N-terminal half is responsible for the 3' incision and the C-terminal half is responsible for the 5' incision. The sequence is that of UvrABC system protein C from Halobacterium salinarum (strain ATCC 29341 / DSM 671 / R1).